Here is a 1075-residue protein sequence, read N- to C-terminus: DNA-directed RNA polymerase subunit beta (1075 aa).

The protein belongs to the RNA polymerase beta chain family. As to quaternary structure, in plastids the minimal PEP RNA polymerase catalytic core is composed of four subunits: alpha, beta, beta', and beta''. When a (nuclear-encoded) sigma factor is associated with the core the holoenzyme is formed, which can initiate transcription.

The protein localises to the plastid. The protein resides in the chloroplast. It catalyses the reaction RNA(n) + a ribonucleoside 5'-triphosphate = RNA(n+1) + diphosphate. Functionally, DNA-dependent RNA polymerase catalyzes the transcription of DNA into RNA using the four ribonucleoside triphosphates as substrates. The polypeptide is DNA-directed RNA polymerase subunit beta (Zea mays (Maize)).